A 165-amino-acid chain; its full sequence is 2-C-methyl-D-erythritol 2,4-cyclodiphosphate synthase (165 aa).

The a divalent metal cation site is built by D13 and H15. 4-CDP-2-C-methyl-D-erythritol 2-phosphate is bound by residues 13–15 and 39–40; these read DRH and HS. H47 provides a ligand contact to a divalent metal cation. 4-CDP-2-C-methyl-D-erythritol 2-phosphate-binding positions include 61 to 63 and F141; that span reads DIG.

Belongs to the IspF family. Homotrimer. The cofactor is a divalent metal cation.

It carries out the reaction 4-CDP-2-C-methyl-D-erythritol 2-phosphate = 2-C-methyl-D-erythritol 2,4-cyclic diphosphate + CMP. Its pathway is isoprenoid biosynthesis; isopentenyl diphosphate biosynthesis via DXP pathway; isopentenyl diphosphate from 1-deoxy-D-xylulose 5-phosphate: step 4/6. Functionally, involved in the biosynthesis of isopentenyl diphosphate (IPP) and dimethylallyl diphosphate (DMAPP), two major building blocks of isoprenoid compounds. Catalyzes the conversion of 4-diphosphocytidyl-2-C-methyl-D-erythritol 2-phosphate (CDP-ME2P) to 2-C-methyl-D-erythritol 2,4-cyclodiphosphate (ME-CPP) with a corresponding release of cytidine 5-monophosphate (CMP). This chain is 2-C-methyl-D-erythritol 2,4-cyclodiphosphate synthase, found in Thermotoga maritima (strain ATCC 43589 / DSM 3109 / JCM 10099 / NBRC 100826 / MSB8).